The chain runs to 326 residues: DNA-directed RNA polymerase subunit alpha (326 aa).

An alpha N-terminal domain (alpha-NTD) region spans residues 1-232 (MQSATEFLKP…SQLSVFADLE (232 aa)). The segment at 246-326 (VDPLLLRPVD…NWPPAGLERP (81 aa)) is alpha C-terminal domain (alpha-CTD).

This sequence belongs to the RNA polymerase alpha chain family. As to quaternary structure, homodimer. The RNAP catalytic core consists of 2 alpha, 1 beta, 1 beta' and 1 omega subunit. When a sigma factor is associated with the core the holoenzyme is formed, which can initiate transcription.

The enzyme catalyses RNA(n) + a ribonucleoside 5'-triphosphate = RNA(n+1) + diphosphate. Functionally, DNA-dependent RNA polymerase catalyzes the transcription of DNA into RNA using the four ribonucleoside triphosphates as substrates. The polypeptide is DNA-directed RNA polymerase subunit alpha (Thiobacillus denitrificans (strain ATCC 25259 / T1)).